The primary structure comprises 168 residues: Lipoprotein signal peptidase (168 aa).

3 helical membrane passes run 15–35 (AIAA…LGLL), 69–89 (WGRW…AVWV), and 95–115 (PLLA…NLID). Residues Asp-124 and Asp-141 contribute to the active site. Residues 133–153 (FPWVFNIADSGISVGVALLLL) form a helical membrane-spanning segment.

This sequence belongs to the peptidase A8 family.

The protein resides in the cell inner membrane. The enzyme catalyses Release of signal peptides from bacterial membrane prolipoproteins. Hydrolyzes -Xaa-Yaa-Zaa-|-(S,diacylglyceryl)Cys-, in which Xaa is hydrophobic (preferably Leu), and Yaa (Ala or Ser) and Zaa (Gly or Ala) have small, neutral side chains.. The protein operates within protein modification; lipoprotein biosynthesis (signal peptide cleavage). Functionally, this protein specifically catalyzes the removal of signal peptides from prolipoproteins. In Caulobacter vibrioides (strain ATCC 19089 / CIP 103742 / CB 15) (Caulobacter crescentus), this protein is Lipoprotein signal peptidase.